The chain runs to 387 residues: NADPH-dependent aldehyde reductase YqhD (387 aa).

12 residues coordinate NADP(+): Gly-38, Ser-40, Asn-68, Gly-95, Ser-96, Asp-99, Thr-138, Asn-147, Gly-149, Lys-160, Tyr-179, and Thr-182. The Zn(2+) site is built by Asp-194, His-198, His-267, and His-281.

This sequence belongs to the iron-containing alcohol dehydrogenase family. As to quaternary structure, homodimer. The crystals contain two dimers in the asymmetric unit. The cofactor is Zn(2+).

It catalyses the reaction a primary alcohol + NADP(+) = an aldehyde + NADPH + H(+). The catalysed reaction is butan-1-ol + NADP(+) = butanal + NADPH + H(+). It carries out the reaction 1-propanol + NADP(+) = propanal + NADPH + H(+). The enzyme catalyses allyl alcohol + NADP(+) = acrolein + NADPH + H(+). Exhibits NADPH-dependent reductase activity for a broad range of short-chain aldehydes. Shows highest catalytic efficiency toward butanal, propanal and the highly toxic aldehydes acrolein and malondialdehyde (MDA), which are produced mainly during lipid peroxidation. Mediates resistance to reactive oxygen species (ROS) elicitors, such as paraquat and potassium tellurite, probably by protecting the cell against the toxic effects of reactive aldehydes derived from membrane lipid peroxidation. Also acts, with lower efficiency, on acetaldehyde, glyceraldehyde, glycolaldehyde, methylglyoxal, glyoxal and hydroxyacetone. Could be involved in glyoxal metabolism, by catalyzing the reduction of glyoxal to glycolaldehyde, and further to 1,2-ethandiol. Catalyzes the reduction of isobutyraldehyde (2-methylpropanal) to isobutanol, and probably contributes to the production of isobutanol. Can probably catalyze the reduction of glutaraldehyde, a widely used biocide, to 1,5-pentanediol, which is non-toxic. Overexpression of YqhD protects the cells against glutaraldehyde toxicity. Can catalyze in vitro the NADPH-dependent reduction of furfural, a natural product of lignocellulosic decomposition, to the less toxic product, furfuryl alcohol. However, it is unlikely that furfural is a physiological substrate. Its function is as follows. In contrast, Sulzenbacher et al. detected significant activities only in the presence of alcohol and NADP(+). They reported in vitro NADP(+)-dependent alcohol dehydrogenase (ADH) activity towards various alcohols, with a preference for alcohols longer than C(3), but the affinity for the substrates is poor, suggesting that these compounds are not the physiological substrates. Perez et al. did not detect dehydrogenase activity with short and medium chain alcohols such as methanol, ethanol, propanol, butanol or isopropanol. This Escherichia coli (strain K12) protein is NADPH-dependent aldehyde reductase YqhD (yqhD).